Reading from the N-terminus, the 339-residue chain is Phenylalanine--tRNA ligase alpha subunit (339 aa).

Mg(2+) is bound at residue Glu254.

This sequence belongs to the class-II aminoacyl-tRNA synthetase family. Phe-tRNA synthetase alpha subunit type 1 subfamily. In terms of assembly, tetramer of two alpha and two beta subunits. It depends on Mg(2+) as a cofactor.

Its subcellular location is the cytoplasm. It carries out the reaction tRNA(Phe) + L-phenylalanine + ATP = L-phenylalanyl-tRNA(Phe) + AMP + diphosphate + H(+). The chain is Phenylalanine--tRNA ligase alpha subunit from Alkaliphilus oremlandii (strain OhILAs) (Clostridium oremlandii (strain OhILAs)).